The chain runs to 43 residues: Protein PsbN (43 aa).

A helical membrane pass occupies residues 4-24 (ATIIVIFVSSLLVGITAYSVY).

This sequence belongs to the PsbN family.

It is found in the plastid. The protein resides in the chloroplast thylakoid membrane. In terms of biological role, may play a role in photosystem I and II biogenesis. The chain is Protein PsbN from Thalassiosira pseudonana (Marine diatom).